Consider the following 153-residue polypeptide: 3-hydroxyacyl-[acyl-carrier-protein] dehydratase FabZ (153 aa).

The active site involves histidine 57.

The protein belongs to the thioester dehydratase family. FabZ subfamily.

The protein resides in the cytoplasm. The catalysed reaction is a (3R)-hydroxyacyl-[ACP] = a (2E)-enoyl-[ACP] + H2O. In terms of biological role, involved in unsaturated fatty acids biosynthesis. Catalyzes the dehydration of short chain beta-hydroxyacyl-ACPs and long chain saturated and unsaturated beta-hydroxyacyl-ACPs. This Vibrio cholerae serotype O1 (strain ATCC 39315 / El Tor Inaba N16961) protein is 3-hydroxyacyl-[acyl-carrier-protein] dehydratase FabZ.